Consider the following 187-residue polypeptide: Large ribosomal subunit protein uL22 (187 aa).

The protein belongs to the universal ribosomal protein uL22 family.

This is Large ribosomal subunit protein uL22 (RPL17) from Theileria annulata.